A 504-amino-acid chain; its full sequence is Glycerol kinase (504 aa).

Thr12 provides a ligand contact to ADP. ATP contacts are provided by Thr12, Thr13, and Ser14. Thr12 lines the sn-glycerol 3-phosphate pocket. Residue Arg16 coordinates ADP. Sn-glycerol 3-phosphate is bound by residues Arg82, Glu83, Tyr134, and Asp249. The glycerol site is built by Arg82, Glu83, Tyr134, Asp249, and Gln250. The ADP site is built by Thr271 and Gly315. Residues Thr271, Gly315, Gln319, and Gly416 each coordinate ATP. ADP is bound by residues Gly416 and Asn420.

This sequence belongs to the FGGY kinase family.

It catalyses the reaction glycerol + ATP = sn-glycerol 3-phosphate + ADP + H(+). It functions in the pathway polyol metabolism; glycerol degradation via glycerol kinase pathway; sn-glycerol 3-phosphate from glycerol: step 1/1. With respect to regulation, inhibited by fructose 1,6-bisphosphate (FBP). Key enzyme in the regulation of glycerol uptake and metabolism. Catalyzes the phosphorylation of glycerol to yield sn-glycerol 3-phosphate. This chain is Glycerol kinase, found in Mycobacteroides abscessus (strain ATCC 19977 / DSM 44196 / CCUG 20993 / CIP 104536 / JCM 13569 / NCTC 13031 / TMC 1543 / L948) (Mycobacterium abscessus).